The primary structure comprises 158 residues: tRNA (cytidine(34)-2'-O)-methyltransferase (158 aa).

Residues Gly-103, Ile-123, and Ser-131 each contribute to the S-adenosyl-L-methionine site.

Belongs to the class IV-like SAM-binding methyltransferase superfamily. RNA methyltransferase TrmH family. TrmL subfamily. As to quaternary structure, homodimer.

The protein resides in the cytoplasm. The catalysed reaction is cytidine(34) in tRNA + S-adenosyl-L-methionine = 2'-O-methylcytidine(34) in tRNA + S-adenosyl-L-homocysteine + H(+). The enzyme catalyses 5-carboxymethylaminomethyluridine(34) in tRNA(Leu) + S-adenosyl-L-methionine = 5-carboxymethylaminomethyl-2'-O-methyluridine(34) in tRNA(Leu) + S-adenosyl-L-homocysteine + H(+). Functionally, methylates the ribose at the nucleotide 34 wobble position in the two leucyl isoacceptors tRNA(Leu)(CmAA) and tRNA(Leu)(cmnm5UmAA). Catalyzes the methyl transfer from S-adenosyl-L-methionine to the 2'-OH of the wobble nucleotide. This Ancylobacter novellus (strain ATCC 8093 / DSM 506 / JCM 20403 / CCM 1077 / IAM 12100 / NBRC 12443 / NCIMB 10456) (Starkeya novella) protein is tRNA (cytidine(34)-2'-O)-methyltransferase.